The primary structure comprises 630 residues: MDVTKIKNPRFLKNMSTKQLIELSADIRKFLIEKLSKTGGHIGPNLGVVELTIALHKVFDSPKDKLIWDVGHQSYVHKILTGRASEFDTLRQYKGLSGFPKRSESEHDVWETGHSSTSLSAAMGMAIARDLKGTDEYIVPIIGDGALTGGMALEALNHIGHEKKDIIVVLNDNEMSIAPNVGALHNVLGRLRTAGKYQWVKDELEFLLKRIPAVGGKLAATAERIKDSLKYLLVSGVFFEELGFTYLGPVDGHNFDDLFENLHYAKKIKGPVLLHVITKKGKGYSPAENDKVGTWHGTGPYKIETGDFLKPVDTAPSWSELVSETVRKLARTDKRIVAITPAMPVGSKLEGFASEFPDRMFDVGIAEQHATTLAAGLATQGMKPFLAIYSTFLQRAYDQVVHDVCRQNLNVFFAIDRAGLVGADGETHQGVFDIAFLRHVPNLVIMMPKDENEGQHMVYTAIQYDDGPIALRFPRGNGLGVKLDEELKKIPIGTWEVLREGRDLAILTFGTTISMALEAAEKLAKDNISVKVVNARFIKPMDEKILHDLLESNIPILTIEEAVLQGGFGSAVLEFAHDHGYHQAVINRMGIPDRFIEHGSVKELLNEIGLTTAHIIDRVKTIIPRKQKRA.

Thiamine diphosphate contacts are provided by residues His72 and 113–115; that span reads GHS. Asp144 serves as a coordination point for Mg(2+). Residues 145–146, Asn173, Tyr284, and Glu367 contribute to the thiamine diphosphate site; that span reads GA. Residue Asn173 coordinates Mg(2+).

This sequence belongs to the transketolase family. DXPS subfamily. In terms of assembly, homodimer. The cofactor is Mg(2+). It depends on thiamine diphosphate as a cofactor.

The catalysed reaction is D-glyceraldehyde 3-phosphate + pyruvate + H(+) = 1-deoxy-D-xylulose 5-phosphate + CO2. Its pathway is metabolic intermediate biosynthesis; 1-deoxy-D-xylulose 5-phosphate biosynthesis; 1-deoxy-D-xylulose 5-phosphate from D-glyceraldehyde 3-phosphate and pyruvate: step 1/1. Its function is as follows. Catalyzes the acyloin condensation reaction between C atoms 2 and 3 of pyruvate and glyceraldehyde 3-phosphate to yield 1-deoxy-D-xylulose-5-phosphate (DXP). This chain is 1-deoxy-D-xylulose-5-phosphate synthase, found in Geobacillus sp. (strain WCH70).